Consider the following 322-residue polypeptide: Glutamyl-Q tRNA(Asp) synthetase (322 aa).

Residues Arg-28 to Ser-32 and Glu-64 contribute to the L-glutamate site. The 'HIGH' region motif lies at Pro-31 to Ser-41. 4 residues coordinate Zn(2+): Cys-120, Cys-122, Tyr-134, and Cys-138. L-glutamate is bound by residues Tyr-191 and Arg-209. The 'KMSKS' region motif lies at Lys-247 to Gln-251. Lys-250 provides a ligand contact to ATP.

Belongs to the class-I aminoacyl-tRNA synthetase family. GluQ subfamily. The cofactor is Zn(2+).

Catalyzes the tRNA-independent activation of glutamate in presence of ATP and the subsequent transfer of glutamate onto a tRNA(Asp). Glutamate is transferred on the 2-amino-5-(4,5-dihydroxy-2-cyclopenten-1-yl) moiety of the queuosine in the wobble position of the QUC anticodon. This Pectobacterium atrosepticum (strain SCRI 1043 / ATCC BAA-672) (Erwinia carotovora subsp. atroseptica) protein is Glutamyl-Q tRNA(Asp) synthetase.